The primary structure comprises 289 residues: Nucleotide-binding protein LAF_0356 (289 aa).

Glycine 12–threonine 19 serves as a coordination point for ATP. Aspartate 62–serine 65 is a binding site for GTP.

Belongs to the RapZ-like family.

Displays ATPase and GTPase activities. This is Nucleotide-binding protein LAF_0356 from Limosilactobacillus fermentum (strain NBRC 3956 / LMG 18251) (Lactobacillus fermentum).